The following is a 39-amino-acid chain: Large ribosomal subunit protein bL36 (39 aa).

This sequence belongs to the bacterial ribosomal protein bL36 family.

The polypeptide is Large ribosomal subunit protein bL36 (Levilactobacillus brevis (strain ATCC 367 / BCRC 12310 / CIP 105137 / JCM 1170 / LMG 11437 / NCIMB 947 / NCTC 947) (Lactobacillus brevis)).